The sequence spans 348 residues: Alcohol dehydrogenase 2 (348 aa).

Zn(2+) is bound by residues Cys44, His67, Cys98, Cys101, Cys104, Cys112, and Cys154. NAD(+) contacts are provided by residues 178-184 (GAAGGLG), Asp202, Lys207, 269-271 (VGL), and Arg341.

It belongs to the zinc-containing alcohol dehydrogenase family. Homotetramer. Zn(2+) serves as cofactor.

It localises to the cytoplasm. It catalyses the reaction a primary alcohol + NAD(+) = an aldehyde + NADH + H(+). It carries out the reaction a secondary alcohol + NAD(+) = a ketone + NADH + H(+). The sequence is that of Alcohol dehydrogenase 2 (ADH2) from Candida albicans (strain SC5314 / ATCC MYA-2876) (Yeast).